We begin with the raw amino-acid sequence, 367 residues long: Histidinol-phosphate aminotransferase (367 aa).

Residue lysine 225 is modified to N6-(pyridoxal phosphate)lysine.

The protein belongs to the class-II pyridoxal-phosphate-dependent aminotransferase family. Histidinol-phosphate aminotransferase subfamily. Homodimer. Pyridoxal 5'-phosphate is required as a cofactor.

The catalysed reaction is L-histidinol phosphate + 2-oxoglutarate = 3-(imidazol-4-yl)-2-oxopropyl phosphate + L-glutamate. Its pathway is amino-acid biosynthesis; L-histidine biosynthesis; L-histidine from 5-phospho-alpha-D-ribose 1-diphosphate: step 7/9. The chain is Histidinol-phosphate aminotransferase from Hyphomonas neptunium (strain ATCC 15444).